The primary structure comprises 359 residues: Peptide chain release factor 1 (359 aa).

At Gln235 the chain carries N5-methylglutamine.

It belongs to the prokaryotic/mitochondrial release factor family. Methylated by PrmC. Methylation increases the termination efficiency of RF1.

Its subcellular location is the cytoplasm. Peptide chain release factor 1 directs the termination of translation in response to the peptide chain termination codons UAG and UAA. This Anaplasma phagocytophilum (strain HZ) protein is Peptide chain release factor 1.